Here is a 155-residue protein sequence, read N- to C-terminus: Small ribosomal subunit protein bS6 (155 aa).

Residues 94–155 (EKHEEGPSAM…RPRRPREDRV (62 aa)) are disordered.

It belongs to the bacterial ribosomal protein bS6 family.

In terms of biological role, binds together with bS18 to 16S ribosomal RNA. This chain is Small ribosomal subunit protein bS6, found in Rhizobium johnstonii (strain DSM 114642 / LMG 32736 / 3841) (Rhizobium leguminosarum bv. viciae).